Consider the following 113-residue polypeptide: Non-specific lipid-transfer protein 6 (113 aa).

The first 19 residues, 1–19 (MRSLLLAVCLVLALHCGEA), serve as a signal peptide directing secretion. 4 disulfide bridges follow: Cys-23/Cys-70, Cys-33/Cys-47, Cys-48/Cys-95, and Cys-68/Cys-109.

It belongs to the plant LTP family.

In terms of biological role, plant non-specific lipid-transfer proteins transfer phospholipids as well as galactolipids across membranes. May play a role in wax or cutin deposition in the cell walls of expanding epidermal cells and certain secretory tissues. The chain is Non-specific lipid-transfer protein 6 (LTP6) from Arabidopsis thaliana (Mouse-ear cress).